The sequence spans 412 residues: Protein arginine N-methyltransferase 2 (412 aa).

One can recognise an RMT2 domain in the interval 190 to 412 (TAADPDTYLN…YYYHPKISFA (223 aa)). S-adenosyl-L-methionine is bound by residues Tyr197, Met227, 250–255 (FGMGII), 271–273 (EAH), 298–299 (WQ), and Asp319.

This sequence belongs to the class I-like SAM-binding methyltransferase superfamily. RMT2 methyltransferase family. As to quaternary structure, monomer.

It is found in the cytoplasm. The protein resides in the nucleus. Functionally, S-adenosyl-L-methionine-dependent protein-arginine N-methyltransferase that methylates the delta-nitrogen atom of arginine residues to form N5-methylarginine (type IV) in target proteins. Monomethylates ribosomal protein L12. The protein is Protein arginine N-methyltransferase 2 of Candida glabrata (strain ATCC 2001 / BCRC 20586 / JCM 3761 / NBRC 0622 / NRRL Y-65 / CBS 138) (Yeast).